The sequence spans 415 residues: Multidrug resistance protein MdtA (415 aa).

The N-terminal stretch at 1–21 (MKGSYKSRWVIVIVVVIAAIA) is a signal peptide. Disordered stretches follow at residues 32 to 60 (SRSA…GPLA) and 392 to 415 (EAQS…GARS). Over residues 399–415 (PEEKATSREYAKKGARS) the composition is skewed to basic and acidic residues.

The protein belongs to the membrane fusion protein (MFP) (TC 8.A.1) family. Part of a tripartite efflux system composed of MdtA, MdtB and MdtC.

The protein resides in the cell inner membrane. Functionally, the MdtABC tripartite complex confers resistance against novobiocin and deoxycholate. The sequence is that of Multidrug resistance protein MdtA from Escherichia coli (strain 55989 / EAEC).